Consider the following 557-residue polypeptide: Cytochrome P450 monooxygenase FSL4 (557 aa).

2 helical membrane passes run 6–26 (LWLVTVTATLSLFVWQLIFLL) and 32–52 (IVVCLIAESLFFVAWFFYWTV). 2 N-linked (GlcNAc...) asparagine glycosylation sites follow: N127 and N393. C494 contacts heme.

The protein belongs to the cytochrome P450 family. Requires heme as cofactor.

It localises to the membrane. It functions in the pathway secondary metabolite biosynthesis. Functionally, cytochrome P450 monooxygenase; part of the gene cluster that mediates the biosynthesis of fusarielins F, G and H, decaketide compounds with 5 methylations and a decaline core that act as mycoestrogens as they stimulate growth of MCF-7 breast cancer cells. The initial compound in the pathway is produced by the reducing polyketide synthase FSL1. FSL1 lacks an active enoyl reductase (ER) domain and biosynthesis of fusarielins relies on the trans-acting enoyl reductase FSL5, before it is released through hydrolysis catalyzed by the thioesterase FSL2. Fusarielins F, G, and H have a C11=C12 cis double bond and is fully reduced between C10 and C11 and between C12 and C13. FSL3 can be involved in the formation of the C11=C12 cis double bond by moving a hypothetical C10=C11 or C12=C13 trans double bond to form prefusarielin. Prefusarielin is oxygenated at C15 and C16 by FSL4, resulting in fusarielin F, which subsequently is epoxidized into fusarielin G by the same enzyme. The final step in the pathway is a reduction of the carboxylic acid moiety to yield fusarielin H via a still undetermined mechanism. The sequence is that of Cytochrome P450 monooxygenase FSL4 from Gibberella zeae (strain ATCC MYA-4620 / CBS 123657 / FGSC 9075 / NRRL 31084 / PH-1) (Wheat head blight fungus).